A 170-amino-acid polypeptide reads, in one-letter code: Type IV pilus assembly protein C (170 aa).

An N-terminal signal peptide occupies residues 1-23 (MKSKLPLILINLSLISSPLGANA). A disordered region spans residues 87-107 (KTVSKPAKSNTPPQQAPVNNS). Residues 93 to 107 (AKSNTPPQQAPVNNS) show a composition bias toward polar residues. Positions 109 to 166 (RSILEAELSNERKALTEAQKMLSQARLAKGGNINHQKINALQSNVLDRQQNIQALQRE) form a coiled coil.

The protein resides in the periplasm. In terms of biological role, required for stabilizing type IV pilus (T4p) in extended, nonretracted conformation on the bacterial cell surface. The chain is Type IV pilus assembly protein C from Neisseria gonorrhoeae (strain ATCC 700825 / FA 1090).